The sequence spans 243 residues: Carboxy-S-adenosyl-L-methionine synthase (243 aa).

S-adenosyl-L-methionine is bound by residues Y40, 65-67 (GCS), 90-91 (DN), 118-119 (DI), N133, and R200.

Belongs to the class I-like SAM-binding methyltransferase superfamily. Cx-SAM synthase family. In terms of assembly, homodimer.

The enzyme catalyses prephenate + S-adenosyl-L-methionine = carboxy-S-adenosyl-L-methionine + 3-phenylpyruvate + H2O. In terms of biological role, catalyzes the conversion of S-adenosyl-L-methionine (SAM) to carboxy-S-adenosyl-L-methionine (Cx-SAM). The chain is Carboxy-S-adenosyl-L-methionine synthase from Shewanella baltica (strain OS223).